We begin with the raw amino-acid sequence, 515 residues long: Cytoplasmic tRNA 2-thiolation protein 2 (515 aa).

2 disordered regions span residues 1 to 24 and 188 to 217; these read MCQV…RPSR and LGAG…ARPP. C2 carries the post-translational modification N-acetylcysteine. Residues S415, S419, S435, and S508 each carry the phosphoserine modification.

Belongs to the CTU2/NCS2 family. In terms of assembly, component of a complex at least composed of URM1, CTU2/NCS2 and CTU1/ATPBD3.

The protein resides in the cytoplasm. The protein operates within tRNA modification; 5-methoxycarbonylmethyl-2-thiouridine-tRNA biosynthesis. Plays a central role in 2-thiolation of mcm(5)S(2)U at tRNA wobble positions of tRNA(Lys), tRNA(Glu) and tRNA(Gln). May act by forming a heterodimer with CTU1/ATPBD3 that ligates sulfur from thiocarboxylated URM1 onto the uridine of tRNAs at wobble position. The chain is Cytoplasmic tRNA 2-thiolation protein 2 from Homo sapiens (Human).